A 431-amino-acid chain; its full sequence is Adenylosuccinate lyase (431 aa).

Residues 4-5, 67-69, and 93-94 each bind N(6)-(1,2-dicarboxyethyl)-AMP; these read RY, RHD, and TS. Catalysis depends on histidine 141, which acts as the Proton donor/acceptor. A N(6)-(1,2-dicarboxyethyl)-AMP-binding site is contributed by glutamine 212. The active-site Proton donor/acceptor is the serine 262. Residues serine 263, 268–270, and 307–311 each bind N(6)-(1,2-dicarboxyethyl)-AMP; these read KRN and SVERV.

The protein belongs to the lyase 1 family. Adenylosuccinate lyase subfamily. As to quaternary structure, homooligomer. Residues from neighboring subunits contribute catalytic and substrate-binding residues to each active site.

It carries out the reaction N(6)-(1,2-dicarboxyethyl)-AMP = fumarate + AMP. It catalyses the reaction (2S)-2-[5-amino-1-(5-phospho-beta-D-ribosyl)imidazole-4-carboxamido]succinate = 5-amino-1-(5-phospho-beta-D-ribosyl)imidazole-4-carboxamide + fumarate. The protein operates within purine metabolism; AMP biosynthesis via de novo pathway; AMP from IMP: step 2/2. Its pathway is purine metabolism; IMP biosynthesis via de novo pathway; 5-amino-1-(5-phospho-D-ribosyl)imidazole-4-carboxamide from 5-amino-1-(5-phospho-D-ribosyl)imidazole-4-carboxylate: step 2/2. In terms of biological role, catalyzes two reactions in de novo purine nucleotide biosynthesis. Catalyzes the breakdown of 5-aminoimidazole- (N-succinylocarboxamide) ribotide (SAICAR or 2-[5-amino-1-(5-phospho-beta-D-ribosyl)imidazole-4-carboxamido]succinate) to 5-aminoimidazole-4-carboxamide ribotide (AICAR or 5-amino-1-(5-phospho-beta-D-ribosyl)imidazole-4-carboxamide) and fumarate, and of adenylosuccinate (ADS or N(6)-(1,2-dicarboxyethyl)-AMP) to adenosine monophosphate (AMP) and fumarate. In Synechocystis sp. (strain ATCC 27184 / PCC 6803 / Kazusa), this protein is Adenylosuccinate lyase (purB).